A 63-amino-acid polypeptide reads, in one-letter code: UPF0337 protein SERP0494 (63 aa).

The segment at 1–46 (MAEDKFEQAKGNIKETVGNATDNKELEKDGKGDKASGKAKEAVENV) is disordered. Residues 22–46 (DNKELEKDGKGDKASGKAKEAVENV) show a composition bias toward basic and acidic residues.

This sequence belongs to the UPF0337 (CsbD) family.

The protein is UPF0337 protein SERP0494 of Staphylococcus epidermidis (strain ATCC 35984 / DSM 28319 / BCRC 17069 / CCUG 31568 / BM 3577 / RP62A).